Consider the following 469-residue polypeptide: 3-isopropylmalate dehydratase large subunit (469 aa).

C347, C410, and C413 together coordinate [4Fe-4S] cluster.

Belongs to the aconitase/IPM isomerase family. LeuC type 1 subfamily. As to quaternary structure, heterodimer of LeuC and LeuD. The cofactor is [4Fe-4S] cluster.

It catalyses the reaction (2R,3S)-3-isopropylmalate = (2S)-2-isopropylmalate. The protein operates within amino-acid biosynthesis; L-leucine biosynthesis; L-leucine from 3-methyl-2-oxobutanoate: step 2/4. Catalyzes the isomerization between 2-isopropylmalate and 3-isopropylmalate, via the formation of 2-isopropylmaleate. The protein is 3-isopropylmalate dehydratase large subunit of Burkholderia pseudomallei (strain 1106a).